Here is a 77-residue protein sequence, read N- to C-terminus: uncharacterized protein (77 aa).

This is an uncharacterized protein from Xylella fastidiosa (strain 9a5c).